The primary structure comprises 154 residues: Myoglobin (154 aa).

Residues 2-148 (GLSDGEWQLV…FRNDMAAKYK (147 aa)) form the Globin domain. Serine 4 bears the Phosphoserine mark. A nitrite-binding site is contributed by histidine 65. Histidine 65 lines the O2 pocket. Threonine 68 bears the Phosphothreonine mark. A heme b-binding site is contributed by histidine 94.

The protein belongs to the globin family. Monomeric.

It localises to the cytoplasm. It is found in the sarcoplasm. It catalyses the reaction Fe(III)-heme b-[protein] + nitric oxide + H2O = Fe(II)-heme b-[protein] + nitrite + 2 H(+). The enzyme catalyses H2O2 + AH2 = A + 2 H2O. In terms of biological role, monomeric heme protein which primary function is to store oxygen and facilitate its diffusion within muscle tissues. Reversibly binds oxygen through a pentacoordinated heme iron and enables its timely and efficient release as needed during periods of heightened demand. Depending on the oxidative conditions of tissues and cells, and in addition to its ability to bind oxygen, it also has a nitrite reductase activity whereby it regulates the production of bioactive nitric oxide. Under stress conditions, like hypoxia and anoxia, it also protects cells against reactive oxygen species thanks to its pseudoperoxidase activity. This Ochotona curzoniae (Black-lipped pika) protein is Myoglobin (MB).